The chain runs to 674 residues: MVLYNFKKIQVVPTSKDFIDIVLSKTQRKTPTEIHKQYAIGRIRTFYMRKVKYTAQSYHEKLTQIIGDFPLLDDIHPFYADLINVLYDKDHYKLALGQLNTARNLIDNLSKDYLRLLKYGDSLYRCKQLKRASLGRMCTLMLKQGPSLQYLEQVRQHLARLPSIDPNTRTLLLTGYPNVGKSSFMNKLTRANVDVQPYAFTTKSLFVGHTDFKYNTWQVIDTPGILDHPLDERNTIEMQSITALAHLHSCVLFLIDISERCGYTIKQQVDLFFSIKALFLNKPLLVVLNKIDARRPEDVPEDDWKLIQSLADPARGGIGGTHLIPMSNLTEEGIAKVKDTACSILFEERVEKKLKSTRIEKEIHRLHLAQPQARDKKVRAPCIPESVIAAARQADMDEESDYKKPTLTAAMMEMIEEHENDEKYAQGIIPIYDVNAWKKKYLLKNDEWKFDIVPEIINGQNIADFVDPDILKRLEELEMEEEAFLEELKNAEDDEESDLDEENEALYDEIQEKKHELRINHQIKDSSKPQLSKGRRGIDTKEMASHLKSMHHEDDEIGDIIQSVRDHSKSRISGKKRSRSASRSDSQAPTSEERGLSLNRSKSRQRSTTRIASPAPGEGFHDLAQKEKADKLDKRSRKKRNQDGRKGESDRHVYNLMPKHLFSGKRSGGTNDFR.

The OBG-type G domain occupies arginine 169–phenylalanine 346. Residues glycine 175–serine 182, aspartate 221–isoleucine 225, and asparagine 289–aspartate 292 each bind GTP. A compositionally biased stretch (basic and acidic residues) spans arginine 518–serine 527. Disordered stretches follow at residues arginine 518–isoleucine 538 and valine 564–arginine 674. Positions serine 570–serine 580 are enriched in basic residues. Basic and acidic residues-rich tracts occupy residues glycine 619–aspartate 633 and asparagine 641–valine 653.

It belongs to the TRAFAC class OBG-HflX-like GTPase superfamily. OBG GTPase family. NOG subfamily.

Its subcellular location is the nucleus. It localises to the nucleolus. Functionally, involved in the biogenesis of the 60S ribosomal subunit. This is Probable nucleolar GTP-binding protein 1 (nog1) from Dictyostelium discoideum (Social amoeba).